The sequence spans 253 residues: UPF0174 protein jhp_1494 (253 aa).

Belongs to the UPF0174 family.

The protein is UPF0174 protein jhp_1494 of Helicobacter pylori (strain J99 / ATCC 700824) (Campylobacter pylori J99).